A 233-amino-acid polypeptide reads, in one-letter code: MALDQGAKVFGVDIAASPAPLANHPNYKFLKADLCDKQTPKDVVQACVKMFGGRIDGLLNIAGIMDSNQSVDSVSDEMWDRCIAVNLTAPIRLMREVIAIMREQKSGNIVNVASKAATSGAVSGVAYTASKHGLVGATKNVAWRFKHDNIRCNAVCPGGVVGTGVHNEMDIQKWDKEAMKTMFLIHQSHSCDKDKGIGLRAEDIARPLLFLVSDRSKGINGAILPIDNAWSTI.

The NADP(+) site is built by aspartate 33, arginine 95, tyrosine 127, lysine 131, and valine 160. Tyrosine 127 acts as the Proton donor in catalysis. The active-site Lowers pKa of active site Tyr is lysine 131.

This sequence belongs to the short-chain dehydrogenases/reductases (SDR) family.

It participates in secondary metabolite biosynthesis; terpenoid biosynthesis. Functionally, short chain dehydrogenase; part of the gene cluster that mediates the biosynthesis of terretonin, a fungal meroterpenoid that acts as a mycotoxin. The first step of the pathway is the synthesis of 3,5-dimethylorsellinic acid (DMOA) by the polyketide synthase trt4. DMOA is then prenylated into farnesyl-DMOA by the polyprenyl transferase trt2. Methylation by the methyltransferase trt5 then leads to farnesyl-DMOA methyl ester which is further subject to epoxidation by the FAD-dependent monooxygenase trt8 to yield epoxyfarnesyl-DMOA methyl ester. Cyclization of epoxyfarnesyl-DMOA methyl ester by the terpene cyclase trt1 leads to a tetracycle intermediate which is in turn converted to preterretonin. Dehydrogenase trt9 comes next to transform preterretonin to preterrenoid. The FAD-dependent monooxygenase trt3 is then required for the C-hydroxylation at C16 of preterrenoid to yield terrenoid. The cytochrome P450 trt6 catalyzes three successive oxidations to transform terrenoid into an unstable intermediate, which then undergoes the D-ring expansion and unusual rearrangement of the methoxy group to afford the core skeleton of terretonin. Trt14 catalyzes the D-ring expansion of terretonin involving intramolecular methoxy rearrangement as well as the hydrolysis of the expanded D-ring and the methyl ester moiety. Finally, the nonheme iron-dependent dioxygenase trt7 accomplishes the last two oxidation reactions steps to complete the biosynthesis of terretonin. Terretonin C is produced via spontaneous decarboxylation of the terretonin precursor. Another shunt product of the terretonin biosynthesis is dihydrofarnesyl-DMOA, derived from epoxyfarnesyl-DMOA through hydrolysis of the epoxide. This chain is Short chain dehydrogenase trt9, found in Aspergillus terreus (strain NIH 2624 / FGSC A1156).